Consider the following 488-residue polypeptide: Histamine H1 receptor (488 aa).

The Extracellular segment spans residues 1-29 (MSLPNTSSASEDKMCEGNRTAMASPQLLP). N-linked (GlcNAc...) asparagine glycans are attached at residues asparagine 5 and asparagine 18. Residues 30–50 (LVVVLSSISLVTVGLNLLVLY) form a helical membrane-spanning segment. Topologically, residues 51 to 64 (AVRSERKLHTVGNL) are cytoplasmic. A helical membrane pass occupies residues 65–89 (YIVSLSVADLIVGAVVMPMNILYLI). Residues 90 to 97 (MTKWSLGR) are Extracellular-facing. The helical transmembrane segment at 98-123 (PLCLFWLSMDYVASTASIFSVFILCI) threads the bilayer. Cysteine 100 and cysteine 180 are oxidised to a cystine. Histamine is bound by residues aspartate 107 and threonine 112. The important for agonist binding stretch occupies residues 107-112 (DYVAST). At 124-144 (DRYRSVQQPLRYLRYRTKTRA) the chain is on the cytoplasmic side. 2 positions are modified to phosphothreonine: threonine 140 and threonine 142. The helical transmembrane segment at 145-164 (SATILGAWFLSFLWVIPILG) threads the bilayer. The Extracellular segment spans residues 165 to 188 (WHHFTPLAPELREDKCETDFYNVT). Residues 189–211 (WFKIMTAIINFYLPTLLMLWFYV) traverse the membrane as a helical segment. Asparagine 198 contacts histamine. The Cytoplasmic segment spans residues 212–417 (KIYKAVRRHC…LNRERKAAKQ (206 aa)). A Phosphoserine modification is found at serine 230. Positions 245–337 (KEGAKKPGKE…SQPKMDEQSL (93 aa)) are disordered. Polar residues predominate over residues 322–337 (ANDQTLSQPKMDEQSL). A phosphoserine mark is found at serine 344, serine 347, serine 381, serine 383, serine 397, and serine 399. The chain crosses the membrane as a helical span at residues 418–441 (LGCIMAAFILCWIPYFIFFMVIAF). The important for agonist binding stretch occupies residues 425–429 (FILCW). Position 432 (tyrosine 432) interacts with histamine. A disulfide bridge connects residues cysteine 442 and cysteine 445. Over 442 to 447 (CNSCCS) the chain is Extracellular. The helical transmembrane segment at 448–470 (EPVHMFTIWLGYINSTLNPLIYP) threads the bilayer. Residues 471–488 (LCNENFKKTFKKILHIRS) lie on the Cytoplasmic side of the membrane.

It belongs to the G-protein coupled receptor 1 family. In terms of processing, phosphorylation at sites in the second and third cytoplasmic loops independently contribute to agonist-induced receptor down-regulation.

It is found in the cell membrane. In terms of biological role, G-protein-coupled receptor for histamine, a biogenic amine that functions as an immune modulator and a neurotransmitter. Through the H1 receptor, histamine mediates the contraction of smooth muscles and increases capillary permeability due to contraction of terminal venules. Also mediates neurotransmission in the central nervous system and thereby regulates circadian rhythms, emotional and locomotor activities as well as cognitive functions. The protein is Histamine H1 receptor of Mus musculus (Mouse).